Reading from the N-terminus, the 209-residue chain is Probable nicotinate-nucleotide adenylyltransferase (209 aa).

It belongs to the NadD family.

It carries out the reaction nicotinate beta-D-ribonucleotide + ATP + H(+) = deamido-NAD(+) + diphosphate. It functions in the pathway cofactor biosynthesis; NAD(+) biosynthesis; deamido-NAD(+) from nicotinate D-ribonucleotide: step 1/1. Catalyzes the reversible adenylation of nicotinate mononucleotide (NaMN) to nicotinic acid adenine dinucleotide (NaAD). In Idiomarina loihiensis (strain ATCC BAA-735 / DSM 15497 / L2-TR), this protein is Probable nicotinate-nucleotide adenylyltransferase.